The primary structure comprises 360 residues: Peptide chain release factor 1 (360 aa).

Gln-237 carries the N5-methylglutamine modification.

Belongs to the prokaryotic/mitochondrial release factor family. Post-translationally, methylated by PrmC. Methylation increases the termination efficiency of RF1.

It is found in the cytoplasm. Its function is as follows. Peptide chain release factor 1 directs the termination of translation in response to the peptide chain termination codons UAG and UAA. The polypeptide is Peptide chain release factor 1 (Pseudomonas savastanoi pv. phaseolicola (strain 1448A / Race 6) (Pseudomonas syringae pv. phaseolicola (strain 1448A / Race 6))).